The sequence spans 55 residues: Large ribosomal subunit protein bL33B (55 aa).

This sequence belongs to the bacterial ribosomal protein bL33 family.

This chain is Large ribosomal subunit protein bL33B, found in Kineococcus radiotolerans (strain ATCC BAA-149 / DSM 14245 / SRS30216).